The primary structure comprises 1286 residues: 5-oxoprolinase (1286 aa).

Residues serine 930 and serine 1077 each carry the phosphoserine modification.

It belongs to the oxoprolinase family. In terms of assembly, homodimer.

It localises to the cytoplasm. It catalyses the reaction 5-oxo-L-proline + ATP + 2 H2O = L-glutamate + ADP + phosphate + H(+). Catalyzes the cleavage of 5-oxo-L-proline to form L-glutamate coupled to the hydrolysis of ATP to ADP and inorganic phosphate. This Saccharomyces cerevisiae (strain ATCC 204508 / S288c) (Baker's yeast) protein is 5-oxoprolinase (OXP1).